A 252-amino-acid chain; its full sequence is Adenosylcobinamide-GDP ribazoletransferase (252 aa).

7 helical membrane-spanning segments follow: residues 34 to 54 (GASF…IIYK), 55 to 75 (LCII…AGIV), 113 to 133 (YACL…CSIV), 138 to 158 (LIII…AFIG), 174 to 194 (IGKW…FFLM), 198 to 218 (FIYV…FNVF), and 230 to 250 (LLGA…CVII).

Belongs to the CobS family. It depends on Mg(2+) as a cofactor.

The protein localises to the cell membrane. The enzyme catalyses alpha-ribazole + adenosylcob(III)inamide-GDP = adenosylcob(III)alamin + GMP + H(+). The catalysed reaction is alpha-ribazole 5'-phosphate + adenosylcob(III)inamide-GDP = adenosylcob(III)alamin 5'-phosphate + GMP + H(+). It participates in cofactor biosynthesis; adenosylcobalamin biosynthesis; adenosylcobalamin from cob(II)yrinate a,c-diamide: step 7/7. Its function is as follows. Joins adenosylcobinamide-GDP and alpha-ribazole to generate adenosylcobalamin (Ado-cobalamin). Also synthesizes adenosylcobalamin 5'-phosphate from adenosylcobinamide-GDP and alpha-ribazole 5'-phosphate. The chain is Adenosylcobinamide-GDP ribazoletransferase from Clostridium kluyveri (strain NBRC 12016).